Reading from the N-terminus, the 723-residue chain is Tripartite motif-containing protein 42 (723 aa).

Residues C146–D192 form an RING-type zinc finger. 2 consecutive B box-type zinc fingers follow at residues P235 to T280 and Q285 to L326. C290, H293, C313, and H318 together coordinate Zn(2+). Residues K382–K407 are a coiled coil. The region spanning L434–T492 is the COS domain. The region spanning T603–G701 is the Fibronectin type-III domain.

The protein belongs to the TRIM/RBCC family.

This chain is Tripartite motif-containing protein 42 (TRIM42), found in Homo sapiens (Human).